A 915-amino-acid chain; its full sequence is Alpha-xylosidase 1 (915 aa).

Residues 1–27 form the signal peptide; it reads MASSSSSLAFSLSLLLALILCFSPTQS. Residues N153, N304, and N375 are each glycosylated (N-linked (GlcNAc...) asparagine). Catalysis depends on residues D440 and E443. 2 N-linked (GlcNAc...) asparagine glycosylation sites follow: N476 and N490. Catalysis depends on D563, which acts as the Proton donor. 3 N-linked (GlcNAc...) asparagine glycosylation sites follow: N819, N888, and N907.

The protein belongs to the glycosyl hydrolase 31 family. As to expression, expressed in roots, stems, leaves, flowers and siliques. Expressed in cell types undergoing cell wall modifications, including trichomes, vasculature, stomata, and elongating anther filaments. Not detected in pollen.

It localises to the secreted. It is found in the cell wall. The protein resides in the extracellular space. Its subcellular location is the apoplast. It catalyses the reaction Hydrolysis of terminal, non-reducing alpha-D-xylose residues with release of alpha-D-xylose.. Functionally, glycoside hydrolase releasing xylosyl residues from xyloglucan oligosaccharides at the non-reducing end. Has alpha-xylosidase activity against xylan oligosaccharides. Also has alpha-glucosidase activity against p-nitrophenyl-alpha-D-glucopyranoside. No activity against p-nitrophenyl-D-xyloside. This chain is Alpha-xylosidase 1, found in Arabidopsis thaliana (Mouse-ear cress).